Reading from the N-terminus, the 194-residue chain is Imidazoleglycerol-phosphate dehydratase (194 aa).

This sequence belongs to the imidazoleglycerol-phosphate dehydratase family.

The protein resides in the cytoplasm. It carries out the reaction D-erythro-1-(imidazol-4-yl)glycerol 3-phosphate = 3-(imidazol-4-yl)-2-oxopropyl phosphate + H2O. The protein operates within amino-acid biosynthesis; L-histidine biosynthesis; L-histidine from 5-phospho-alpha-D-ribose 1-diphosphate: step 6/9. The chain is Imidazoleglycerol-phosphate dehydratase from Bacillus cereus (strain B4264).